The chain runs to 325 residues: Helicase VP6-A (325 aa).

2 disordered regions span residues Met-1–Gly-122 and Asp-185–Arg-230. 4 stretches are compositionally biased toward basic and acidic residues: residues Val-8 to Gln-18, Glu-32 to Glu-54, Gly-61 to Ile-79, and Leu-92 to Gly-105. Residue Lys-106 participates in ATP binding. Residues Lys-106–Gly-122 are compositionally biased toward gly residues. 2 stretches are compositionally biased toward basic and acidic residues: residues Asp-185–Gly-203 and His-211–Ala-229.

Belongs to the orbivirus VP6 family. In terms of assembly, homohexamer.

It is found in the virion. It catalyses the reaction ATP + H2O = ADP + phosphate + H(+). Functionally, ATP dependent RNA helicase essential for RNA packaging and viral transcription. Possesses ss- and dsRNA-binding capacity. The polypeptide is Helicase VP6-A (Segment-9) (Bluetongue virus 17 (isolate USA) (BTV 17)).